The sequence spans 144 residues: Toxin MT0934 (144 aa).

Functionally, toxic component of a type II toxin-antitoxin (TA) system. Its toxic effect is neutralized by coexpression with cognate antitoxin MT0933. The sequence is that of Toxin MT0934 from Mycobacterium tuberculosis (strain CDC 1551 / Oshkosh).